Consider the following 336-residue polypeptide: MKDRYILAFETSCDETSVAVLKNETELLSNVIASQIESHKRFGGVVPEVASRHHVEVITVCIEEALAEAGISEEQVTAVAVTYGPGLVGALLVGLAAAKSFAWAHDIPLIPVNHMAGHLMAAQSVEPLEFPLLALLVSGGHTELVYVSQAGDYKIVGETRDDAVGEAYDKVGRVMGLTYPAGREIDLLAHEGQDIYDFPRAMIKEDNLEFSFSGLKSAFINLHHNAQQKGEVLSNQDLSASFQAAVMDILMAKTKKALEKYPVKTLVVAGGVAANQGLRERLAAEIQDVKVIIPPLRLCGDNAGMIAYASVSEWNKENFASLDLNAKPSLAFETME.

Residues histidine 114 and histidine 118 each coordinate Fe cation. Substrate is bound by residues leucine 136–glycine 140, aspartate 169, glycine 182, aspartate 186, and asparagine 275. Residue aspartate 301 coordinates Fe cation.

Belongs to the KAE1 / TsaD family. It depends on Fe(2+) as a cofactor.

It localises to the cytoplasm. It catalyses the reaction L-threonylcarbamoyladenylate + adenosine(37) in tRNA = N(6)-L-threonylcarbamoyladenosine(37) in tRNA + AMP + H(+). In terms of biological role, required for the formation of a threonylcarbamoyl group on adenosine at position 37 (t(6)A37) in tRNAs that read codons beginning with adenine. Is involved in the transfer of the threonylcarbamoyl moiety of threonylcarbamoyl-AMP (TC-AMP) to the N6 group of A37, together with TsaE and TsaB. TsaD likely plays a direct catalytic role in this reaction. This Streptococcus sanguinis (strain SK36) protein is tRNA N6-adenosine threonylcarbamoyltransferase.